Here is a 434-residue protein sequence, read N- to C-terminus: Zinc carboxypeptidase (434 aa).

Positions 1-33 (MSPKRRRLMAAALGACVALVLPLHAGSAQPSTA) are cleaved as a signal peptide. The propeptide at 34–114 (KTPERTVFEV…DFTDPQVGTQ (81 aa)) is activation peptide. The 302-residue stretch at 122–423 (GYHNFQETVT…SAVELFLSYS (302 aa)) folds into the Peptidase M14 domain. The Zn(2+) site is built by His183 and Glu186. Residues 270–295 (GSSSSGSSETTAARRRSPPRRSPHPH) are disordered. Over residues 282 to 293 (ARRRSPPRRSPH) the composition is skewed to basic residues. Position 315 (His315) interacts with Zn(2+). Glu388 functions as the Proton donor/acceptor in the catalytic mechanism.

The protein belongs to the peptidase M14 family. Requires Zn(2+) as cofactor.

It carries out the reaction Releases a C-terminal residue, which may be hydrophobic or positively charged.. Functionally, carboxypeptidase that possesses the specificities of both mammalian Cpase A and B. Thus shows broad substrate specificity, being able to cleave Cbz-Gly-Leu, Cbz-Gly-Val, Cbz-Gly-Phe, Cbz-Gly-Lys and Bz-Gly-Arg in vitro. This chain is Zinc carboxypeptidase, found in Saccharothrix mutabilis subsp. capreolus (Streptomyces capreolus).